The chain runs to 510 residues: Mitogen-activated protein kinase 9 (510 aa).

The Protein kinase domain occupies 23-314; the sequence is YQIQEVIGKG…AEEALADPYF (292 aa). Residues 29–37 and lysine 52 contribute to the ATP site; that span reads IGKGSYGVV. Catalysis depends on aspartate 149, which acts as the Proton acceptor. A Phosphothreonine modification is found at threonine 185. Residues 185-187 carry the TXY motif; that stretch reads TDY. The residue at position 187 (tyrosine 187) is a Phosphotyrosine. Phosphothreonine is present on threonine 190. Positions 393–461 are disordered; that stretch reads NYGKGEKGSP…SDYRNGTSQT (69 aa). The span at 410–431 shows a compositional bias: basic and acidic residues; the sequence is LPRERVPAPKKENGSHNHDIEN. The segment covering 433–461 has biased composition (polar residues); the sequence is SIASLVTTLESPPTSQHEGSDYRNGTSQT.

Belongs to the protein kinase superfamily. CMGC Ser/Thr protein kinase family. MAP kinase subfamily. In terms of processing, dually phosphorylated on Thr-185 and Tyr-187, which activates the enzyme.

The enzyme catalyses L-seryl-[protein] + ATP = O-phospho-L-seryl-[protein] + ADP + H(+). It catalyses the reaction L-threonyl-[protein] + ATP = O-phospho-L-threonyl-[protein] + ADP + H(+). With respect to regulation, activated by threonine and tyrosine phosphorylation. The chain is Mitogen-activated protein kinase 9 (MPK9) from Arabidopsis thaliana (Mouse-ear cress).